A 164-amino-acid polypeptide reads, in one-letter code: Peroxynitrite isomerase 2 (164 aa).

The GXWXGXG signature appears at 17-23 (GSWAGRG). Histidine 155 is a binding site for heme b.

Belongs to the nitrobindin family. In terms of assembly, homodimer. Requires heme b as cofactor.

It catalyses the reaction peroxynitrite = nitrate. The protein operates within nitrogen metabolism. Its function is as follows. Heme-binding protein able to scavenge peroxynitrite and to protect free L-tyrosine against peroxynitrite-mediated nitration, by acting as a peroxynitrite isomerase that converts peroxynitrite to nitrate. Therefore, this protein likely plays a role in peroxynitrite sensing and in the detoxification of reactive nitrogen and oxygen species (RNS and ROS, respectively). Is able to bind nitric oxide (NO) in vitro, but may act as a sensor of peroxynitrite levels in vivo. This Mycobacterium bovis (strain BCG / Pasteur 1173P2) protein is Peroxynitrite isomerase 2.